The following is a 399-amino-acid chain: S-adenosylmethionine synthase (399 aa).

An ATP-binding site is contributed by His-15. A Mg(2+)-binding site is contributed by Asp-17. Glu-43 is a binding site for K(+). Glu-56 and Gln-99 together coordinate L-methionine. Positions 99 to 109 (QSPDIADGVDH) are flexible loop. ATP-binding positions include 175-177 (DAK), 242-243 (RF), Asp-251, 257-258 (RK), Ala-274, and Lys-278. Asp-251 contributes to the L-methionine binding site. An L-methionine-binding site is contributed by Lys-282.

This sequence belongs to the AdoMet synthase family. In terms of assembly, homotetramer; dimer of dimers. Mg(2+) serves as cofactor. It depends on K(+) as a cofactor.

The protein resides in the cytoplasm. It catalyses the reaction L-methionine + ATP + H2O = S-adenosyl-L-methionine + phosphate + diphosphate. It functions in the pathway amino-acid biosynthesis; S-adenosyl-L-methionine biosynthesis; S-adenosyl-L-methionine from L-methionine: step 1/1. In terms of biological role, catalyzes the formation of S-adenosylmethionine (AdoMet) from methionine and ATP. The overall synthetic reaction is composed of two sequential steps, AdoMet formation and the subsequent tripolyphosphate hydrolysis which occurs prior to release of AdoMet from the enzyme. The chain is S-adenosylmethionine synthase from Lactobacillus acidophilus (strain ATCC 700396 / NCK56 / N2 / NCFM).